Consider the following 504-residue polypeptide: Maturase K (504 aa).

The protein belongs to the intron maturase 2 family. MatK subfamily.

The protein resides in the plastid. It localises to the chloroplast. Its function is as follows. Usually encoded in the trnK tRNA gene intron. Probably assists in splicing its own and other chloroplast group II introns. This chain is Maturase K, found in Quercus cerris (Turkey oak).